We begin with the raw amino-acid sequence, 155 residues long: Aspartate carbamoyltransferase regulatory chain (155 aa).

Zn(2+) contacts are provided by C110, C115, C139, and C142.

The protein belongs to the PyrI family. As to quaternary structure, contains catalytic and regulatory chains. Zn(2+) serves as cofactor.

In terms of biological role, involved in allosteric regulation of aspartate carbamoyltransferase. In Yersinia pseudotuberculosis serotype IB (strain PB1/+), this protein is Aspartate carbamoyltransferase regulatory chain.